Consider the following 118-residue polypeptide: Large ribosomal subunit protein bL20 (118 aa).

It belongs to the bacterial ribosomal protein bL20 family.

Functionally, binds directly to 23S ribosomal RNA and is necessary for the in vitro assembly process of the 50S ribosomal subunit. It is not involved in the protein synthesizing functions of that subunit. The polypeptide is Large ribosomal subunit protein bL20 (Sulfurimonas denitrificans (strain ATCC 33889 / DSM 1251) (Thiomicrospira denitrificans (strain ATCC 33889 / DSM 1251))).